We begin with the raw amino-acid sequence, 212 residues long: MALQQTVEQTVAGLGYDLVEIERSAGGLLRVTIDLPWTAPTSEAVAAGIPEPFVTVEDCEKVTRQLQFALEVDGVDYKRLEVSSPGIDRPLRNEQDFERFVGEVIDITLKAPMGAAAAGQVSATRKKFRGTLERVAGADGAPGWQIVWSDAPEPKPGQKVSKKRAPAKLHALGFVLDELRDARLAPIVDFKGRKAKTQPGFSDIDDGTNVPD.

This sequence belongs to the RimP family.

It localises to the cytoplasm. Its function is as follows. Required for maturation of 30S ribosomal subunits. This chain is Ribosome maturation factor RimP, found in Variovorax paradoxus (strain S110).